A 613-amino-acid chain; its full sequence is AP-5 complex subunit mu (613 aa).

Residues K309–V563 form the MHD domain. The disordered stretch occupies residues S501–E522. Over residues G511–A521 the composition is skewed to acidic residues.

This sequence belongs to the adaptor complexes medium subunit family. In terms of assembly, probably part of the adaptor protein complex 5 (AP-5).

It is found in the cytoplasmic vesicle membrane. This Arabidopsis thaliana (Mouse-ear cress) protein is AP-5 complex subunit mu (AP5M).